The primary structure comprises 142 residues: Large ribosomal subunit protein uL11 (142 aa).

Belongs to the universal ribosomal protein uL11 family. Part of the ribosomal stalk of the 50S ribosomal subunit. Interacts with L10 and the large rRNA to form the base of the stalk. L10 forms an elongated spine to which L12 dimers bind in a sequential fashion forming a multimeric L10(L12)X complex. Post-translationally, one or more lysine residues are methylated.

Its function is as follows. Forms part of the ribosomal stalk which helps the ribosome interact with GTP-bound translation factors. This is Large ribosomal subunit protein uL11 from Baumannia cicadellinicola subsp. Homalodisca coagulata.